Reading from the N-terminus, the 463-residue chain is Asparagine--tRNA ligase (463 aa).

Belongs to the class-II aminoacyl-tRNA synthetase family. As to quaternary structure, homodimer.

The protein resides in the cytoplasm. It carries out the reaction tRNA(Asn) + L-asparagine + ATP = L-asparaginyl-tRNA(Asn) + AMP + diphosphate + H(+). This Clostridium tetani (strain Massachusetts / E88) protein is Asparagine--tRNA ligase.